The primary structure comprises 307 residues: UPF0282 protein PH1002 (307 aa).

Belongs to the UPF0282 family.

The polypeptide is UPF0282 protein PH1002 (Pyrococcus horikoshii (strain ATCC 700860 / DSM 12428 / JCM 9974 / NBRC 100139 / OT-3)).